Reading from the N-terminus, the 31-residue chain is Cyclotide vpub-A (31 aa).

The cyclopeptide (Gly-Asn) cross-link spans 1–31 (GVIPCGESCVFIPCISAVIGCSCKSKVCYRN). 3 disulfides stabilise this stretch: Cys5–Cys21, Cys9–Cys23, and Cys14–Cys28.

The protein belongs to the cyclotide family. Bracelet subfamily. This is a cyclic peptide.

Probably participates in a plant defense mechanism. The polypeptide is Cyclotide vpub-A (Viola pubescens (Downy yellow violet)).